The following is a 445-amino-acid chain: METIFAQSSAFGKAGVAVFRISGPKSLEVLQLLTGRKDFKPRLMYYQQIISPETNELIDNAMVVYFKLPNSFTGEDVVEIHTHGSKAISIMLINTLLNIDDIRLAEAGEFTKRAFLNNKFDLTAAEGIADLINAETIMQHRQAVRQANGGLEELYNNWRNQLLKIIALLEAYLDFPDEDIPDSILNDVNNTHKNIVNEISNYLNDNRRGELLNNGLKLAIIGPPNTGKSSLLNFLMQRNIAIVSNIAGTTRDIIEGHLDIGGYPIILQDTAGIRAESTDIIEREGIKRAINSAKTANIKIIMFDAEKLDLSINNDIIDLIDENTIVIINKIDLIEPSQIFPIEKKYKCLRVSVKNNIALSSILKNIENIAENIAGFTETPYITNQRHRHYLKQALSHLMAFNLDNDLVLATEDMRMTARCIGLITGVINVEEILNEIFKNFCIGK.

(6S)-5-formyl-5,6,7,8-tetrahydrofolate is bound by residues Arg20, Glu79, and Lys119. Residues 215 to 371 (GLKLAIIGPP…ILKNIENIAE (157 aa)) enclose the TrmE-type G domain. K(+) is bound at residue Asn225. Residues 225-230 (NTGKSS), 244-250 (SNIAGTT), and 269-272 (DTAG) contribute to the GTP site. Residue Ser229 coordinates Mg(2+). Ser244, Ile246, and Thr249 together coordinate K(+). Position 250 (Thr250) interacts with Mg(2+). Lys445 is a binding site for (6S)-5-formyl-5,6,7,8-tetrahydrofolate.

This sequence belongs to the TRAFAC class TrmE-Era-EngA-EngB-Septin-like GTPase superfamily. TrmE GTPase family. In terms of assembly, homodimer. Heterotetramer of two MnmE and two MnmG subunits. K(+) serves as cofactor.

The protein resides in the cytoplasm. In terms of biological role, exhibits a very high intrinsic GTPase hydrolysis rate. Involved in the addition of a carboxymethylaminomethyl (cmnm) group at the wobble position (U34) of certain tRNAs, forming tRNA-cmnm(5)s(2)U34. In Rickettsia typhi (strain ATCC VR-144 / Wilmington), this protein is tRNA modification GTPase MnmE.